The sequence spans 70 residues: Large ribosomal subunit protein uL29 (70 aa).

The protein belongs to the universal ribosomal protein uL29 family.

The polypeptide is Large ribosomal subunit protein uL29 (Prochlorococcus marinus (strain NATL1A)).